The primary structure comprises 352 residues: UDP-3-O-acylglucosamine N-acyltransferase (352 aa).

Catalysis depends on H242, which acts as the Proton acceptor.

The protein belongs to the transferase hexapeptide repeat family. LpxD subfamily. In terms of assembly, homotrimer.

It carries out the reaction a UDP-3-O-[(3R)-3-hydroxyacyl]-alpha-D-glucosamine + a (3R)-hydroxyacyl-[ACP] = a UDP-2-N,3-O-bis[(3R)-3-hydroxyacyl]-alpha-D-glucosamine + holo-[ACP] + H(+). The protein operates within bacterial outer membrane biogenesis; LPS lipid A biosynthesis. In terms of biological role, catalyzes the N-acylation of UDP-3-O-acylglucosamine using 3-hydroxyacyl-ACP as the acyl donor. Is involved in the biosynthesis of lipid A, a phosphorylated glycolipid that anchors the lipopolysaccharide to the outer membrane of the cell. This chain is UDP-3-O-acylglucosamine N-acyltransferase, found in Alkalilimnicola ehrlichii (strain ATCC BAA-1101 / DSM 17681 / MLHE-1).